A 203-amino-acid chain; its full sequence is Thymidylate kinase (203 aa).

Gly-10–Ser-17 provides a ligand contact to ATP.

It belongs to the thymidylate kinase family.

The enzyme catalyses dTMP + ATP = dTDP + ADP. Phosphorylation of dTMP to form dTDP in both de novo and salvage pathways of dTTP synthesis. The polypeptide is Thymidylate kinase (Cupriavidus taiwanensis (strain DSM 17343 / BCRC 17206 / CCUG 44338 / CIP 107171 / LMG 19424 / R1) (Ralstonia taiwanensis (strain LMG 19424))).